The sequence spans 502 residues: MNNNNVTEATSRAQIRPYYDPDSFNAGYSAVFKPDEGVVDPHGYTIASKLNVINSSPTTKRMANALFKSSPMKKLSNSVNDGLSLEGSNGEITGLNNFEWAELVNIQKWRKIFEQLLDMFFRKYFQLLIQQPFDVARLLIQVGEFKIFKTTVDTNKPQAPIILRDEEGDGAAREGEEDAYDEEEIDFFPIERKIAEANSTAPIMAEETDHSHHEPTDISLTIAPQSLHTIDVINALFDQEGIRGLWKANNTTFIYNFLSLSIDTWFTGLLSSFLGVPDPYFMEVINSPDISKSFILALGAGVFTSIILLPVDLIRTRLIVTSFKKKKNVKTDGKNMVTNTRSLRQLIRCWSWRKNGVSIPLDMWSLTILQSINNSFFNKLFDLVIYNQFHIEKYSQTVMYNTMKFFSKSLELFIKLPLENLLRRCQLNYLLNDQRLSFKVDSTELIVKPKKYNGIWDVIRNNSNTNRGQLWNGWKVGVISLICGYGLQMMNKVDINMEQEKF.

N-acetylmethionine is present on methionine 1. At methionine 1–serine 293 the chain is on the cytoplasmic side. The interval methionine 1–phenylalanine 294 is binds FZO1. Residues proline 288–leucine 383 form a Solcar repeat. A helical; Signal-anchor for type II membrane protein transmembrane segment spans residues phenylalanine 294–isoleucine 314. The interval aspartate 312–phenylalanine 502 is binds MGM1. The Mitochondrial intermembrane segment spans residues arginine 315–phenylalanine 502.

In terms of assembly, interacts with FZO1 through its cytoplasmic domain and with MGM1 through its mitochondrial intermembrane space domain.

Its subcellular location is the mitochondrion outer membrane. Required for mitochondrial fusion as well as normal mitochondrial morphology by bridging the essential interaction between FZO1 and MGM1. May coordinate fusion of inner and outer membranes during mitochondrial fusion. The polypeptide is Mitochondrial fusion and transport protein UGO1 (Saccharomyces cerevisiae (strain ATCC 204508 / S288c) (Baker's yeast)).